Reading from the N-terminus, the 305-residue chain is Methionyl-tRNA formyltransferase (305 aa).

108 to 111 (SLLP) contacts (6S)-5,6,7,8-tetrahydrofolate.

Belongs to the Fmt family.

It catalyses the reaction L-methionyl-tRNA(fMet) + (6R)-10-formyltetrahydrofolate = N-formyl-L-methionyl-tRNA(fMet) + (6S)-5,6,7,8-tetrahydrofolate + H(+). Functionally, attaches a formyl group to the free amino group of methionyl-tRNA(fMet). The formyl group appears to play a dual role in the initiator identity of N-formylmethionyl-tRNA by promoting its recognition by IF2 and preventing the misappropriation of this tRNA by the elongation apparatus. This is Methionyl-tRNA formyltransferase from Clavibacter sepedonicus (Clavibacter michiganensis subsp. sepedonicus).